The following is a 285-amino-acid chain: Probable fructose-bisphosphate aldolase (285 aa).

Position 50 (S50) interacts with D-glyceraldehyde 3-phosphate. D85 functions as the Proton donor in the catalytic mechanism. 4 residues coordinate Zn(2+): H86, D107, E137, and H181. Position 182 (G182) interacts with dihydroxyacetone phosphate. H209 is a binding site for Zn(2+). Dihydroxyacetone phosphate-binding positions include 210–212 (GGT) and 231–234 (NVNT). 2 positions are modified to phosphothreonine: T212 and T234.

Belongs to the class II fructose-bisphosphate aldolase family. Requires Zn(2+) as cofactor. Phosphorylated during sporulation.

The catalysed reaction is beta-D-fructose 1,6-bisphosphate = D-glyceraldehyde 3-phosphate + dihydroxyacetone phosphate. Its pathway is carbohydrate degradation; glycolysis; D-glyceraldehyde 3-phosphate and glycerone phosphate from D-glucose: step 4/4. Its function is as follows. Catalyzes the aldol condensation of dihydroxyacetone phosphate (DHAP or glycerone-phosphate) with glyceraldehyde 3-phosphate (G3P) to form fructose 1,6-bisphosphate (FBP) in gluconeogenesis and the reverse reaction in glycolysis. The protein is Probable fructose-bisphosphate aldolase (fbaA) of Bacillus subtilis (strain 168).